Consider the following 453-residue polypeptide: tRNA hydroxylation protein P (453 aa).

Belongs to the peptidase U32 family.

In terms of biological role, involved in prephenate-dependent formation of 5-hydroxyuridine (ho5U) modification at position 34 in tRNAs, the first step in 5-carboxymethoxyuridine (cmo5U) biosynthesis. Involved differently in ho5U formation in each tRNA; tRNA(Leu3) and tRNA(Pro3) are major targets of TrhP. The chain is tRNA hydroxylation protein P from Escherichia coli (strain K12).